Reading from the N-terminus, the 359-residue chain is Spermine synthase (359 aa).

The region spanning 53–304 (SGWFSEPHPR…GVIGFVLCST (252 aa)) is the PABS domain. S-adenosyl 3-(methylsulfanyl)propylamine is bound at residue glutamine 99. Tyrosine 129 serves as a coordination point for spermidine. Residue glutamine 130 participates in S-adenosyl 3-(methylsulfanyl)propylamine binding. Residue aspartate 154 participates in spermidine binding. S-adenosyl 3-(methylsulfanyl)propylamine-binding positions include glutamate 174 and 205–206 (DA). The active-site Proton acceptor is aspartate 224. Residue tyrosine 292 participates in putrescine binding.

The protein belongs to the spermidine/spermine synthase family. In terms of assembly, heterodimer. Component of a multiprotein complex. Interacts with SPDSYN1 and SPDSYN2. As to expression, expressed predominantly in stem internodes, flower buds and roots.

The enzyme catalyses S-adenosyl 3-(methylsulfanyl)propylamine + spermidine = spermine + S-methyl-5'-thioadenosine + H(+). It functions in the pathway amine and polyamine biosynthesis; spermine biosynthesis; spermine from spermidine: step 1/1. This is Spermine synthase (SPMS) from Arabidopsis thaliana (Mouse-ear cress).